A 403-amino-acid chain; its full sequence is Alkaline protease 1 (403 aa).

Positions 1 to 21 are cleaved as a signal peptide; the sequence is MHSFKRSLLLLGALLPAVFGA. Residues 22–124 constitute a propeptide that is removed on maturation; the sequence is PVEPRRAAEK…QIWYIDALTS (103 aa). The region spanning 35–119 is the Inhibitor I9 domain; it reads KYIVTFKSGL…HVEEDQIWYI (85 aa). A Peptidase S8 domain is found at 129-403; it reads PWGLGAISHK…NLLAYNGADE (275 aa). Residues Asp161 and His192 each act as charge relay system in the active site. Asn252 carries an N-linked (GlcNAc...) asparagine glycan. The active-site Charge relay system is the Ser348.

Belongs to the peptidase S8 family.

Its subcellular location is the secreted. The enzyme catalyses Hydrolysis of proteins with broad specificity, and of Bz-Arg-OEt &gt; Ac-Tyr-OEt. Does not hydrolyze peptide amides.. Functionally, secreted alkaline protease that allows assimilation of proteinaceous substrates. This Emericella nidulans (strain FGSC A4 / ATCC 38163 / CBS 112.46 / NRRL 194 / M139) (Aspergillus nidulans) protein is Alkaline protease 1 (alp1).